The chain runs to 272 residues: MPVVSLAQLLESGVHFGHQTRRWNPRMSQYIFTERNGVHIIDLVQTAQLMDEAYNYIRTASEQGKKFLFVGTKRQAAGIIAQEATRCGGYYINQRWLGGMLTNWTTIKTRVERLKDLERREESKALDLLPKKEASVLRREMAKLQKYLGGIKNMRRLPDGVIMVDQRREYNAVQECQKLNIPIVSLLDTNCDPTQVDIPIPANDDAIRSIKLIVGKLADAIYEGRHGQLEADYEDYYEDYEEYEDDYEGAEGDLDLDSANEEESLEDNNEEE.

The tract at residues 244–272 (EDDYEGAEGDLDLDSANEEESLEDNNEEE) is disordered.

It belongs to the universal ribosomal protein uS2 family.

The protein is Small ribosomal subunit protein uS2 of Trichodesmium erythraeum (strain IMS101).